The sequence spans 82 residues: Small ribosomal subunit protein bS18 (82 aa).

Belongs to the bacterial ribosomal protein bS18 family. As to quaternary structure, part of the 30S ribosomal subunit. Forms a tight heterodimer with protein bS6.

Binds as a heterodimer with protein bS6 to the central domain of the 16S rRNA, where it helps stabilize the platform of the 30S subunit. This chain is Small ribosomal subunit protein bS18, found in Bifidobacterium longum (strain NCC 2705).